A 605-amino-acid chain; its full sequence is Formin-binding protein 1-like (605 aa).

The F-BAR domain maps to 1-263; sequence MSWGTELWDQ…AAKSVDERRD (263 aa). A coiled-coil region spans residues 66–258; it reads FTSCVAFFNI…EGMILAAKSV (193 aa). The tract at residues 245 to 535 is interaction with CDC42; that stretch reads SKCLEGMILA…EFDDEFEDDD (291 aa). Ser295 is modified (phosphoserine). A coiled-coil region spans residues 392–484; sequence LEDFSHLPPE…VEGKTGGRGD (93 aa). The region spanning 397-474 is the REM-1 domain; that stretch reads HLPPEQRRKK…IHKNEAWLSE (78 aa). Residues 476-490 are compositionally biased toward basic and acidic residues; the sequence is EGKTGGRGDRRHSSD. The segment at 476–539 is disordered; that stretch reads EGKTGGRGDR…EFEDDDPLPA (64 aa). Phosphoserine occurs at positions 488, 501, and 505. An interaction with DNM1 region spans residues 522 to 605; it reads GHHNEFDDEF…VTLEKNSKGS (84 aa). Positions 527–536 are enriched in acidic residues; sequence FDDEFEDDDP. Positions 538-599 constitute an SH3 domain; it reads PAIGHCKAIY…PTSYIDVTLE (62 aa). Residues 541-597 form an interaction with DNM2 and WASL region; sequence GHCKAIYPFDGHNEGTLAMKEGEVLYIIEEDKGDGWTRARRQNGEEGYVPTSYIDVT. An interaction with DAAM1, DIAPH1 and DIAPH2 region spans residues 541–605; that stretch reads GHCKAIYPFD…VTLEKNSKGS (65 aa).

The protein belongs to the FNBP1 family. In terms of assembly, homodimerizes, the dimers can polymerize end-to-end to form filamentous structures. Interacts with GTP-bound CDC42. Interacts with DAAM1, DIAPH1, DIAPH2, DNM1, DNM2 and WASL/N-WASP. Interacts with ATG3. Interacts (via SH3 domain) with ABI1, WASF2, CDC42 and WIPF1.

The protein resides in the cytoplasm. Its subcellular location is the cytoskeleton. It localises to the cell cortex. The protein localises to the cytoplasmic vesicle. It is found in the cell membrane. Its function is as follows. Required to coordinate membrane tubulation with reorganization of the actin cytoskeleton during endocytosis. May bind to lipids such as phosphatidylinositol 4,5-bisphosphate and phosphatidylserine and promote membrane invagination and the formation of tubules. Also promotes CDC42-induced actin polymerization by activating the WASL/N-WASP-WASPIP/WIP complex, the predominant form of WASL/N-WASP in cells. Actin polymerization may promote the fission of membrane tubules to form endocytic vesicles. Essential for autophagy of intracellular bacterial pathogens. The protein is Formin-binding protein 1-like (FNBP1L) of Homo sapiens (Human).